The primary structure comprises 373 residues: Cobalt-precorrin-5B C(1)-methyltransferase (373 aa).

Belongs to the CbiD family.

It catalyses the reaction Co-precorrin-5B + S-adenosyl-L-methionine = Co-precorrin-6A + S-adenosyl-L-homocysteine. It functions in the pathway cofactor biosynthesis; adenosylcobalamin biosynthesis; cob(II)yrinate a,c-diamide from sirohydrochlorin (anaerobic route): step 6/10. Its function is as follows. Catalyzes the methylation of C-1 in cobalt-precorrin-5B to form cobalt-precorrin-6A. This is Cobalt-precorrin-5B C(1)-methyltransferase from Polaromonas sp. (strain JS666 / ATCC BAA-500).